A 465-amino-acid polypeptide reads, in one-letter code: FAD-dependent monooxygenase penM (465 aa).

Residues 5–25 (QFHVIIVGGSIAGLTLAHCLH) traverse the membrane as a helical segment. Glutamate 35, glycine 49, arginine 108, aspartate 299, and alanine 312 together coordinate FAD. Residues 435-455 (VLVLLLSALTWSCLGNMNIIM) form a helical membrane-spanning segment.

It belongs to the paxM FAD-dependent monooxygenase family. FAD serves as cofactor.

It localises to the membrane. Its pathway is secondary metabolite biosynthesis. FAD-dependent monooxygenase; part of the gene cluster that mediates the biosynthesis of the indole diterpenes penitrems. The geranylgeranyl diphosphate (GGPP) synthase penG catalyzes the first step in penitrem biosynthesis via conversion of farnesyl pyrophosphate and isopentyl pyrophosphate into geranylgeranyl pyrophosphate (GGPP). Condensation of indole-3-glycerol phosphate with GGPP by the prenyl transferase penC then forms 3-geranylgeranylindole (3-GGI). Epoxidation by the FAD-dependent monooxygenase penM leads to a epoxidized-GGI that is substrate of the terpene cyclase penB for cyclization to yield paspaline. Paspaline is subsequently converted to 13-desoxypaxilline by the cytochrome P450 monooxygenase penP, the latter being then converted to paxilline by the cytochrome P450 monooxygenase penQ. Paxilline is converted to beta-paxitriol via C-10 ketoreduction by the short-chain dehydrogenase PC-15 which can be monoprenylated at the C-20 by the indole diterpene prenyltransferase penD. A two-step elimination (acetylation and elimination) process performed by the O-acetyltransferase PC-16 and the P.simplicissimum ptmI-ortholog not yet identified in P.crustosum, leads to the production of the prenylated form of penijanthine. The FAD-linked oxidoreductase ptmO then converts the prenylated form of penijanthine into PC-M5 which is in turn transformed into PC-M4 by the aromatic dimethylallyltransferase PC-22. A series of oxidation steps involving 4 cytochrome P450 monooxygenases (PC-21, PC-05, PC-23, PC-20) and a FAD-dependent monooxygenase (PC-14) are required for the transformation of PC-M4 to penitrems A and E. Synthesis of these final products is proposed to proceed via penitrems D and C (PC-21, PC-05, PC-14) and penitrems B and F (PC-21, PC-05, PC-14, PC-23). The protein is FAD-dependent monooxygenase penM of Penicillium crustosum (Blue mold fungus).